A 598-amino-acid chain; its full sequence is Movement protein Hsp70h (598 aa).

Belongs to the heat shock protein 70 family. Homomultimer. Interacts with p20. This interaction allows the docking of the latter to the virion.

It localises to the virion. The protein resides in the host cell junction. The protein localises to the host plasmodesma. Its function is as follows. Transports viral genome to neighboring plant cells directly through plasmosdesmata, without any budding. The movement protein allows efficient cell to cell propagation, by bypassing the host cell wall barrier. Two movement proteins, p6, Hsp70h and three structural proteins, CP, CPm, and P64 are essential for cell-cell movement. Also plays a role in virion formation. Together with CPm and p64, encapsidates the 5'-terminal portion of the viral genome. This is Movement protein Hsp70h from Beta vulgaris (Sugar beet).